Here is a 262-residue protein sequence, read N- to C-terminus: Indole-3-glycerol phosphate synthase (262 aa).

Belongs to the TrpC family.

It carries out the reaction 1-(2-carboxyphenylamino)-1-deoxy-D-ribulose 5-phosphate + H(+) = (1S,2R)-1-C-(indol-3-yl)glycerol 3-phosphate + CO2 + H2O. It functions in the pathway amino-acid biosynthesis; L-tryptophan biosynthesis; L-tryptophan from chorismate: step 4/5. This is Indole-3-glycerol phosphate synthase from Chlorobium luteolum (strain DSM 273 / BCRC 81028 / 2530) (Pelodictyon luteolum).